The following is a 282-amino-acid chain: PTS system sorbose-specific EIID component (282 aa).

The 269-residue stretch at 13–281 folds into the PTS EIID domain; it reads TKITKGDMFK…GIVGYWLGIL (269 aa). The next 4 membrane-spanning stretches (helical) occupy residues 135 to 155, 197 to 217, 234 to 254, and 261 to 281; these read LGAS…FVAF, GLFI…PLVV, ILDQ…CMYL, and PILL…LGIL.

It is found in the cell membrane. In terms of biological role, the phosphoenolpyruvate-dependent sugar phosphotransferase system (PTS), a major carbohydrate active transport system, catalyzes the phosphorylation of incoming sugar substrates concomitant with their translocation across the cell membrane. The enzyme II SorABCD PTS system is involved in L-sorbose transport. The polypeptide is PTS system sorbose-specific EIID component (Lacticaseibacillus casei (Lactobacillus casei)).